Here is a 121-residue protein sequence, read N- to C-terminus: Small ribosomal subunit protein uS13 (121 aa).

The interval methionine 89–lysine 121 is disordered.

Belongs to the universal ribosomal protein uS13 family. In terms of assembly, part of the 30S ribosomal subunit. Forms a loose heterodimer with protein S19. Forms two bridges to the 50S subunit in the 70S ribosome.

Located at the top of the head of the 30S subunit, it contacts several helices of the 16S rRNA. In the 70S ribosome it contacts the 23S rRNA (bridge B1a) and protein L5 of the 50S subunit (bridge B1b), connecting the 2 subunits; these bridges are implicated in subunit movement. Contacts the tRNAs in the A and P-sites. This is Small ribosomal subunit protein uS13 from Levilactobacillus brevis (strain ATCC 367 / BCRC 12310 / CIP 105137 / JCM 1170 / LMG 11437 / NCIMB 947 / NCTC 947) (Lactobacillus brevis).